A 459-amino-acid chain; its full sequence is Argininosuccinate lyase (459 aa).

The protein belongs to the lyase 1 family. Argininosuccinate lyase subfamily.

The protein localises to the cytoplasm. The enzyme catalyses 2-(N(omega)-L-arginino)succinate = fumarate + L-arginine. It functions in the pathway amino-acid biosynthesis; L-arginine biosynthesis; L-arginine from L-ornithine and carbamoyl phosphate: step 3/3. This Geobacillus sp. (strain WCH70) protein is Argininosuccinate lyase.